Consider the following 373-residue polypeptide: UDP-N-acetylglucosamine--N-acetylmuramyl-(pentapeptide) pyrophosphoryl-undecaprenol N-acetylglucosamine transferase (373 aa).

Residues 15–17, asparagine 126, arginine 170, serine 198, and glutamine 300 contribute to the UDP-N-acetyl-alpha-D-glucosamine site; that span reads TGG.

This sequence belongs to the glycosyltransferase 28 family. MurG subfamily.

It localises to the cell inner membrane. The enzyme catalyses di-trans,octa-cis-undecaprenyl diphospho-N-acetyl-alpha-D-muramoyl-L-alanyl-D-glutamyl-meso-2,6-diaminopimeloyl-D-alanyl-D-alanine + UDP-N-acetyl-alpha-D-glucosamine = di-trans,octa-cis-undecaprenyl diphospho-[N-acetyl-alpha-D-glucosaminyl-(1-&gt;4)]-N-acetyl-alpha-D-muramoyl-L-alanyl-D-glutamyl-meso-2,6-diaminopimeloyl-D-alanyl-D-alanine + UDP + H(+). It functions in the pathway cell wall biogenesis; peptidoglycan biosynthesis. In terms of biological role, cell wall formation. Catalyzes the transfer of a GlcNAc subunit on undecaprenyl-pyrophosphoryl-MurNAc-pentapeptide (lipid intermediate I) to form undecaprenyl-pyrophosphoryl-MurNAc-(pentapeptide)GlcNAc (lipid intermediate II). This Methylobacterium nodulans (strain LMG 21967 / CNCM I-2342 / ORS 2060) protein is UDP-N-acetylglucosamine--N-acetylmuramyl-(pentapeptide) pyrophosphoryl-undecaprenol N-acetylglucosamine transferase.